The sequence spans 30 residues: Alpha-defensin PhD-4 (30 aa).

Cystine bridges form between cysteine 2–cysteine 30, cysteine 4–cysteine 19, and cysteine 9–cysteine 29.

It localises to the secreted. Functionally, in low salt conditions, has antibacterial activity against the Gram-negative bacterium E.coli ML35p (MIC=2.4 uM), the Gram-positive bacteria L.monocytogenes EGD (MIC=2.2 uM) and methicillin-resistant S.aureus ATCC 33591 (MIC=3.5 uM), and the fungus C.albicans 820 (MIC=3.9 uM). At high physiological salt concentrations the antimicrobial activity decreases significantly: E.coli ML35p (MIC=7.1 uM), L.monocytogenes EGD (MIC=1.8 uM), S.aureus ATCC 33591 (MIC=&gt;50 uM), and C.albicans 820 (MIC=&gt;50 uM). The protein is Alpha-defensin PhD-4 of Papio hamadryas (Hamadryas baboon).